A 155-amino-acid polypeptide reads, in one-letter code: Small ribosomal subunit protein uS7cz/uS7cy (155 aa).

The protein belongs to the universal ribosomal protein uS7 family. In terms of assembly, part of the 30S ribosomal subunit.

The protein resides in the plastid. It is found in the chloroplast. Functionally, one of the primary rRNA binding proteins, it binds directly to 16S rRNA where it nucleates assembly of the head domain of the 30S subunit. This chain is Small ribosomal subunit protein uS7cz/uS7cy (rps7-A), found in Vitis vinifera (Grape).